A 142-amino-acid chain; its full sequence is Large ribosomal subunit protein uL11 (142 aa).

It belongs to the universal ribosomal protein uL11 family. In terms of assembly, part of the ribosomal stalk of the 50S ribosomal subunit. Interacts with L10 and the large rRNA to form the base of the stalk. L10 forms an elongated spine to which L12 dimers bind in a sequential fashion forming a multimeric L10(L12)X complex. One or more lysine residues are methylated.

Functionally, forms part of the ribosomal stalk which helps the ribosome interact with GTP-bound translation factors. This is Large ribosomal subunit protein uL11 from Xanthomonas campestris pv. campestris (strain B100).